The sequence spans 307 residues: Cyclin-dependent kinase 5 activator 1 (307 aa).

Glycine 2 is lipidated: N-myristoyl glycine. The residue at position 8 (serine 8) is a Phosphoserine; by CDK5. Positions threonine 97–serine 135 are disordered. Residues glutamine 100–proline 110 show a composition bias toward pro residues. A compositionally biased stretch (polar residues) spans serine 112 to valine 125. Phosphothreonine; by CDK5 is present on threonine 138.

This sequence belongs to the cyclin-dependent kinase 5 activator family. In terms of assembly, heterodimer composed of a catalytic subunit CDK5 and a regulatory subunit CDK5R1 (p25) and macromolecular complex composed of at least CDK5, CDK5R1 (p35) and CDK5RAP1 or CDK5RAP2 or CDK5RAP3. Only the heterodimer shows kinase activity. Interacts with EPHA4 and NGEF; may mediate the activation of NGEF by EPHA4. Interacts with RASGRF2. The complex p35/CDK5 interacts with CLOCK. In terms of processing, the p35 form is proteolytically cleaved by calpain, giving rise to the p25 form. P35 has a 5 to 10 fold shorter half-life compared to p25. The conversion results in deregulation of the CDK5 kinase: p25/CDK5 kinase displays an increased and altered tau phosphorylation in comparison to the p35/CDK5 kinase in vivo. Myristoylated. A proper myristoylation signal is essential for the proper distribution of p35. Post-translationally, phosphorylation at Ser-8 and Thr-138 by CDK5 prevents calpain-mediated proteolysis. In terms of processing, ubiquitinated, leading to its degradation: degradation of p35 by proteasome results in down-regulation of CDK5 activity. During this process, CDK5 phosphorylates p35 and induces its ubiquitination and subsequent degradation. Ubiquitinated by the CRL2(FEM1B) complex, which recognizes the -Gly-Leu-Asp-Arg C-degron at the C-terminus, leading to its degradation. Brain and neuron specific.

The protein resides in the cell membrane. The protein localises to the cell projection. It localises to the neuron projection. It is found in the nucleus. Its subcellular location is the cytoplasm. The protein resides in the perinuclear region. The protein localises to the perikaryon. Functionally, p35 is a neuron specific activator of CDK5. The complex p35/CDK5 is required for neurite outgrowth and cortical lamination. Involved in dendritic spine morphogenesis by mediating the EFNA1-EPHA4 signaling. Activator of TPKII. The complex p35/CDK5 participates in the regulation of the circadian clock by modulating the function of CLOCK protein: phosphorylates CLOCK at 'Thr-451' and 'Thr-461' and regulates the transcriptional activity of the CLOCK-BMAL1 heterodimer in association with altered stability and subcellular distribution. The chain is Cyclin-dependent kinase 5 activator 1 (CDK5R1) from Bos taurus (Bovine).